We begin with the raw amino-acid sequence, 422 residues long: CRISPR-associated endodeoxyribonuclease Cas12f1 (422 aa).

Residues 1–126 (MIKVYRYEIV…PSYKRDIPLD (126 aa)) are recognition domain (REC). A wedge domain (WED) region spans residues 127 to 211 (LIKENISVNR…YLNISYDFEP (85 aa)). The segment at 212 to 220 (QTRVLDLNK) is linker. Residues 221 to 370 (IMGIDLGVAV…IKIDPQYTSQ (150 aa)) form a ruvC-I region. Residues aspartate 225 and glutamate 324 contribute to the active site. Positions 371-399 (RCSECGNIDSGNRIGQAIFKCRACGYEAN) are target nucleic acid-binding (TNB). Zn(2+) is bound by residues cysteine 372, cysteine 375, cysteine 391, and cysteine 394. The tract at residues 400–420 (ADYNAARNIAIPNIDKIIAES) is ruvC-II. Aspartate 401 is an active-site residue.

The protein belongs to the CRISPR-associated endonuclease Cas12f family. As to quaternary structure, an asymmetric homodimer. Guide RNA is probably required for dimerization. Requires Mg(2+) as cofactor. The cofactor is Zn(2+).

Functionally, CRISPR (clustered regularly interspaced short palindromic repeat), is an adaptive immune system that provides protection against mobile genetic elements (viruses, transposable elements and conjugative plasmids). CRISPR clusters contain sequences complementary to antecedent mobile elements and target invading nucleic acids. CRISPR clusters are transcribed and processed into CRISPR RNA (crRNA), which requires a trans-encoded small RNA (tracrRNA), but not this protein. Recognizes a short motif in the CRISPR repeat sequences (the 5' PAM or protospacer adjacent motif, YTT in this organism) to help distinguish self versus nonself, as targets within the CRISPR locus do not have PAMs. Has dsDNA endonuclease activity upon expression in E.coli of this protein, a mini CRISPR array and the probable tracrRNA. Plasmid cleavage is centered around positions 19-24 base pairs 3' of PAM. The mini system protects E.coli against transformation by foreign plasmids. This is CRISPR-associated endodeoxyribonuclease Cas12f1 from Sulfoacidibacillus thermotolerans (Acidibacillus sulfuroxidans).